We begin with the raw amino-acid sequence, 66 residues long: Large ribosomal subunit protein bL35 (66 aa).

The protein belongs to the bacterial ribosomal protein bL35 family.

This Borrelia garinii subsp. bavariensis (strain ATCC BAA-2496 / DSM 23469 / PBi) (Borreliella bavariensis) protein is Large ribosomal subunit protein bL35.